A 475-amino-acid chain; its full sequence is Ataxin-10 (475 aa).

R10 carries the post-translational modification Omega-N-methylarginine. Position 12 is a phosphoserine; by AURKB (S12). S77 carries the post-translational modification Phosphoserine; by PLK1. The residue at position 82 (T82) is a Phosphothreonine; by PLK1. S430 is subject to Phosphoserine.

The protein belongs to the ataxin-10 family. As to quaternary structure, homooligomer. Interacts with GNB2. Interacts with IQCB1. Interacts with OGT. In terms of processing, polyubiquitinated. Phosphorylation at Ser-12 by AURKB promotes the association of ATXN10 with PLK1. Phosphorylation at Ser-77 and Thr-82 by PLK1 may play a role in the regulation of cytokinesis and may stimulate the proteasome-mediated degradation of ATXN10. Expressed in the central nervous system.

Its subcellular location is the cytoplasm. It localises to the perinuclear region. The protein localises to the midbody. It is found in the cytoskeleton. The protein resides in the cilium basal body. Its subcellular location is the microtubule organizing center. It localises to the centrosome. The protein localises to the centriole. May play a role in the regulation of cytokinesis. May play a role in signaling by stimulating protein glycosylation. Induces neuritogenesis by activating the Ras-MAP kinase pathway and is necessary for the survival of cerebellar neurons. Does not appear to play a major role in ciliogenesis. The polypeptide is Ataxin-10 (ATXN10) (Homo sapiens (Human)).